Here is a 392-residue protein sequence, read N- to C-terminus: Cell division protein DivIB (392 aa).

A disordered region spans residues 1–87 (MSEKDNNLTP…ETQSSEAPIE (87 aa)). Residues 1 to 131 (MSEKDNNLTP…KGSAPLLKKM (131 aa)) are Cytoplasmic-facing. Residues 14–32 (KHLEYQKRKAEEAKKEKKA) are compositionally biased toward basic and acidic residues. Over residues 58-76 (TRDEAESAELLEEGFETNN) the composition is skewed to acidic residues. The chain crosses the membrane as a helical span at residues 132–152 (WPALAIVVLVFVGSLYLISPL). The POTRA domain maps to 153–224 (SKISTFSVSG…NRFEAIVKEH (72 aa)). At 153–392 (SKISTFSVSG…TAQSTTTSSN (240 aa)) the chain is on the extracellular side. Positions 368–392 (ISAQNAKKTDASSENTAQSTTTSSN) are disordered.

This sequence belongs to the FtsQ/DivIB family. DivIB subfamily.

It is found in the cell membrane. Its function is as follows. Cell division protein that may be involved in stabilizing or promoting the assembly of the division complex. This chain is Cell division protein DivIB, found in Lactococcus lactis subsp. lactis (strain IL1403) (Streptococcus lactis).